Consider the following 298-residue polypeptide: Iron/alpha-ketoglutarate-dependent dioxygenase ausO (298 aa).

Histidine 130, aspartate 132, and histidine 211 together coordinate Fe cation.

It belongs to the PhyH family. In terms of assembly, homodimer. It depends on Fe cation as a cofactor.

The protein operates within secondary metabolite biosynthesis; terpenoid biosynthesis. In terms of biological role, iron/alpha-ketoglutarate-dependent dioxygenase; part of the gene cluster that mediates the biosynthesis of calidodehydroaustin, a fungal meroterpenoid. The first step of the pathway is the synthesis of 3,5-dimethylorsellinic acid by the polyketide synthase ausA. 3,5-dimethylorsellinic acid is then prenylated by the polyprenyl transferase ausN. Further epoxidation by the FAD-dependent monooxygenase ausM and cyclization by the probable terpene cyclase ausL lead to the formation of protoaustinoid A. Protoaustinoid A is then oxidized to spiro-lactone preaustinoid A3 by the combined action of the FAD-binding monooxygenases ausB and ausC, and the dioxygenase ausE. Acid-catalyzed keto-rearrangement and ring contraction of the tetraketide portion of preaustinoid A3 by ausJ lead to the formation of preaustinoid A4. The aldo-keto reductase ausK, with the help of ausH, is involved in the next step by transforming preaustinoid A4 into isoaustinone which is in turn hydroxylated by the P450 monooxygenase ausI to form austinolide. The cytochrome P450 monooxygenase ausG modifies austinolide to austinol. Austinol is further acetylated to austin by the O-acetyltransferase ausP, which spontaneously changes to dehydroaustin. The cytochrome P450 monooxygenase ausR then converts dehydroaustin is into 7-dehydrodehydroaustin. The hydroxylation catalyzed by ausR permits the O-acetyltransferase ausQ to add an additional acetyl group to the molecule, leading to the formation of acetoxydehydroaustin. The short chain dehydrogenase ausT catalyzes the reduction of the double bond present between carbon atoms 1 and 2 to convert 7-dehydrodehydroaustin into 1,2-dihydro-7-hydroxydehydroaustin. AusQ catalyzes not only an acetylation reaction but also the addition of the PKS ausV diketide product to 1,2-dihydro-7-hydroxydehydroaustin, forming precalidodehydroaustin. Finally, the iron/alpha-ketoglutarate-dependent dioxygenase converts precalidodehydroaustin into calidodehydroaustin. The protein is Iron/alpha-ketoglutarate-dependent dioxygenase ausO of Aspergillus calidoustus.